Reading from the N-terminus, the 281-residue chain is Putative rRNA methyltransferase YqxC (281 aa).

An S4 RNA-binding domain is found at 6-67 (ERLDVLLVER…NPLRYVSRGG (62 aa)).

It belongs to the TlyA family.

The protein is Putative rRNA methyltransferase YqxC (yqxC) of Bacillus subtilis (strain 168).